Reading from the N-terminus, the 542-residue chain is Chaperonin GroEL (542 aa).

ATP-binding positions include 29–32 (TLGP), 86–90 (DGTTT), Gly-413, 476–478 (NAA), and Asp-492.

This sequence belongs to the chaperonin (HSP60) family. As to quaternary structure, forms a cylinder of 14 subunits composed of two heptameric rings stacked back-to-back. Interacts with the co-chaperonin GroES.

Its subcellular location is the cytoplasm. The catalysed reaction is ATP + H2O + a folded polypeptide = ADP + phosphate + an unfolded polypeptide.. In terms of biological role, together with its co-chaperonin GroES, plays an essential role in assisting protein folding. The GroEL-GroES system forms a nano-cage that allows encapsulation of the non-native substrate proteins and provides a physical environment optimized to promote and accelerate protein folding. The polypeptide is Chaperonin GroEL (Listeria welshimeri serovar 6b (strain ATCC 35897 / DSM 20650 / CCUG 15529 / CIP 8149 / NCTC 11857 / SLCC 5334 / V8)).